We begin with the raw amino-acid sequence, 304 residues long: Dihydroorotate dehydrogenase B (NAD(+)), catalytic subunit (304 aa).

Residues serine 21 and 45–46 contribute to the FMN site; that span reads KA. Substrate is bound by residues lysine 45 and 69-73; that span reads NAIGL. FMN is bound by residues asparagine 99 and asparagine 127. Asparagine 127 contributes to the substrate binding site. The active-site Nucleophile is the cysteine 130. Positions 165 and 191 each coordinate FMN. 192-193 provides a ligand contact to substrate; the sequence is NT. FMN is bound by residues glycine 217, 243-244, and 265-266; these read GG and GT.

It belongs to the dihydroorotate dehydrogenase family. Type 1 subfamily. In terms of assembly, heterotetramer of 2 PyrK and 2 PyrD type B subunits. The cofactor is FMN.

Its subcellular location is the cytoplasm. The enzyme catalyses (S)-dihydroorotate + NAD(+) = orotate + NADH + H(+). The protein operates within pyrimidine metabolism; UMP biosynthesis via de novo pathway; orotate from (S)-dihydroorotate (NAD(+) route): step 1/1. Catalyzes the conversion of dihydroorotate to orotate with NAD(+) as electron acceptor. In Listeria innocua serovar 6a (strain ATCC BAA-680 / CLIP 11262), this protein is Dihydroorotate dehydrogenase B (NAD(+)), catalytic subunit (pyrD).